The sequence spans 315 residues: uncharacterized protein (315 aa).

This is an uncharacterized protein from Homo sapiens (Human).